The sequence spans 200 residues: Putative protein ATXN8OS (200 aa).

The segment at proline 19–glutamate 39 is disordered. The segment covering glutamate 25–glutamate 39 has biased composition (acidic residues).

In terms of tissue distribution, expressed in brain. Expressed in muscle tissues (at protein level).

The protein resides in the cytoplasm. This is Putative protein ATXN8OS from Homo sapiens (Human).